A 396-amino-acid chain; its full sequence is 1-deoxy-D-xylulose 5-phosphate reductoisomerase (396 aa).

The NADPH site is built by Thr-15, Gly-16, Ser-17, Ile-18, Gly-41, and Asn-129. Residue Lys-130 participates in 1-deoxy-D-xylulose 5-phosphate binding. Glu-131 lines the NADPH pocket. Asp-155 is a binding site for Mn(2+). 4 residues coordinate 1-deoxy-D-xylulose 5-phosphate: Ser-156, Glu-157, Ser-182, and His-205. Glu-157 serves as a coordination point for Mn(2+). Gly-211 provides a ligand contact to NADPH. Residues Ser-218, Asn-223, Lys-224, and Glu-227 each coordinate 1-deoxy-D-xylulose 5-phosphate. Residue Glu-227 participates in Mn(2+) binding.

It belongs to the DXR family. It depends on Mg(2+) as a cofactor. The cofactor is Mn(2+).

The enzyme catalyses 2-C-methyl-D-erythritol 4-phosphate + NADP(+) = 1-deoxy-D-xylulose 5-phosphate + NADPH + H(+). It functions in the pathway isoprenoid biosynthesis; isopentenyl diphosphate biosynthesis via DXP pathway; isopentenyl diphosphate from 1-deoxy-D-xylulose 5-phosphate: step 1/6. Catalyzes the NADPH-dependent rearrangement and reduction of 1-deoxy-D-xylulose-5-phosphate (DXP) to 2-C-methyl-D-erythritol 4-phosphate (MEP). The chain is 1-deoxy-D-xylulose 5-phosphate reductoisomerase from Xanthomonas euvesicatoria pv. vesicatoria (strain 85-10) (Xanthomonas campestris pv. vesicatoria).